A 32-amino-acid polypeptide reads, in one-letter code: Dermatoxin-J1 (32 aa).

A Glutamine amide modification is found at Gln-32.

Expressed by the skin glands.

It is found in the secreted. Its function is as follows. Antimicrobial peptide. This is Dermatoxin-J1 from Phasmahyla jandaia (Jandaia leaf frog).